Consider the following 1583-residue polypeptide: Protein mesh (1583 aa).

The signal sequence occupies residues 1 to 21 (MGVKIKLVLAVVLILSANVLG). Residues 22-1182 (QDEIVNDTES…EFSQRALFLT (1161 aa)) are Extracellular-facing. The region spanning 260-415 (GIYFRLDRDL…GRHIFRIDEN (156 aa)) is the NIDO domain. In terms of domain architecture, AMOP spans 647 to 798 (GQRWSNSMCN…VGCETFRFER (152 aa)). A VWFD domain is found at 811-1019 (GVAGIFGDPH…HWQLTDREQR (209 aa)). One can recognise a Sushi domain in the interval 1110–1170 (ISCGILETPR…PDYGYTECLR (61 aa)). Cystine bridges form between Cys-1112–Cys-1152 and Cys-1138–Cys-1168. The helical transmembrane segment at 1183–1203 (WGVIVAVILPLGLLICLLWFW) threads the bilayer. Residues 1204–1472 (CWHKPRSEGK…QEYSSRTLGA (269 aa)) lie on the Cytoplasmic side of the membrane. Residues 1232–1250 (LRSSSMGNITDTMKSSTIP) are compositionally biased toward polar residues. The segment at 1232–1448 (LRSSSMGNIT…IPEAPKSAPV (217 aa)) is disordered. Over residues 1291-1300 (GKSDSGKSDK) the composition is skewed to basic and acidic residues. Residues 1405 to 1416 (PIPSQYSPTYSE) are compositionally biased toward polar residues. The helical transmembrane segment at 1473–1493 (TWGIISAVMLPIIIILICVAW) threads the bilayer. Residues 1494 to 1583 (RILQRRKAEE…RQWGGETEIN (90 aa)) are Extracellular-facing. Residues 1521–1539 (DSVKVTSDDESIPYKKDVT) show a composition bias toward basic and acidic residues. The tract at residues 1521-1583 (DSVKVTSDDE…RQWGGETEIN (63 aa)) is disordered.

In fifth instar larvae, expressed in midgut epithelial cells (at protein level).

The protein localises to the membrane. The protein resides in the cell junction. Its subcellular location is the septate junction. It is found in the lateral cell membrane. Functionally, may be required for the proper organization of smooth septate junctions and for the barrier function of the midgut epithelium. The sequence is that of Protein mesh from Bombyx mori (Silk moth).